Reading from the N-terminus, the 187-residue chain is Casparian strip membrane protein 5 (187 aa).

The Cytoplasmic segment spans residues 1 to 24 (MKSGQAEIVETSKGIQKSGLMSRR). A helical membrane pass occupies residues 25 to 45 (IAILEFILRIVAFFNTIGSAI). The Extracellular portion of the chain corresponds to 46 to 74 (LMGTTHETLPFFTQFIRFQAEYNDLPALT). Residues 75–95 (FFVVANAVVSGYLIMSLTLAF) form a helical membrane-spanning segment. Residues 96 to 107 (VHIVKRKTQNTR) are Cytoplasmic-facing. Residues 108–128 (ILLIVLDVAMLGLLSAGASSA) traverse the membrane as a helical segment. The Extracellular segment spans residues 129–161 (AAIVYLAHNGNNKTNWFAICQQFNSFCERISGS). Asparagine 140 is a glycosylation site (N-linked (GlcNAc...) asparagine). A helical transmembrane segment spans residues 162-182 (LIGSFIAVVLLILLILLSAIA). Residues 183–187 (LSRRH) are Cytoplasmic-facing.

It belongs to the Casparian strip membrane proteins (CASP) family. As to quaternary structure, homodimer and heterodimers.

The protein resides in the cell membrane. In terms of biological role, regulates membrane-cell wall junctions and localized cell wall deposition. Required for establishment of the Casparian strip membrane domain (CSD) and the subsequent formation of Casparian strips, a cell wall modification of the root endodermis that determines an apoplastic barrier between the intraorganismal apoplasm and the extraorganismal apoplasm and prevents lateral diffusion. This chain is Casparian strip membrane protein 5, found in Arabidopsis lyrata subsp. lyrata (Lyre-leaved rock-cress).